Here is a 40-residue protein sequence, read N- to C-terminus: Omega-conotoxin RsXXVIA (40 aa).

Post-translationally, contains 4 disulfide bonds. Expressed by the venom duct.

The protein localises to the secreted. Functionally, omega-conotoxins act at presynaptic membranes, they bind and block voltage-gated calcium channels (Cav). This toxin inhibits rat Cav2.2/CACNA1B calcium channels in a dose-dependent manner (EC(50)=2.8 uM), whose effect is partially reversed after washing. In vivo, when injected into mice, it shows both an analgesic effect in acute thermal pain at 30 and 45 minutes post-injection and an anti-nociceptive effect in a formalin chronic pain test. This is Omega-conotoxin RsXXVIA from Conus regularis (Regular cone).